We begin with the raw amino-acid sequence, 691 residues long: MARDFPLERVRNIGIAAHIDAGKTTTTERILFYSGVVHKIGEVHDGAAVTDWMAQERERGITITAAAISTSWNNHRINIIDTPGHVDFTIEVERSMRVLDGVIAVFCAVGGVQPQSETVWRQADRYSVPRMVFVNKMDRTGADFLKVFGQIKDRLKANAVPIQLPIGAEGELSGIIDLVENKAHIYKDDLGQDIEVTDVPADMKDEADKWRNVLMETIAENDEDLIEKFLESGELSNSDLKRGIRTGVLKHNLVPVLCGSAFKNKGVQLVLDAVVDYLPAPIDVPPIQGLLPNGKEAVRPSDDNAPFSALAFKVMADPYGKLTFVRMYSGVLEKGSYVLNSTKDTKERISRLVVLKADDREEVDALRAGDLGAVLGLKNTTTGDTLCATDDPIVLETLFVPEPVISVAVEPKTKGDMEKLSKALVSLAEEDPTFRVRTDQETGQTVIAGMGELHLEILVDRMLREFKVEANIGAPQVSYRETIRGSSKGEGKFSRQTGGKGQYGHVVIEMEPGEPESGFEFINKIVGGIVPKEYIKPAEQGMKETCESGVIAGYPLIDVKCTMVDGSYHDVDSSEMAFKIAGSMAFKDAVKKCNPVLLEPMMKVEVEIPEDFLGSVIGDLSSRRGQVEGQSVDDGTSKVSSKVPLAEMFGYATELRSMTQGRGIFSMEFSHYEDVPRNVAEAIISKNQGNS.

In terms of domain architecture, tr-type G spans glutamate 8–isoleucine 282. GTP is bound by residues alanine 17–threonine 24, aspartate 81–histidine 85, and asparagine 135–aspartate 138.

Belongs to the TRAFAC class translation factor GTPase superfamily. Classic translation factor GTPase family. EF-G/EF-2 subfamily.

The protein localises to the cytoplasm. Functionally, catalyzes the GTP-dependent ribosomal translocation step during translation elongation. During this step, the ribosome changes from the pre-translocational (PRE) to the post-translocational (POST) state as the newly formed A-site-bound peptidyl-tRNA and P-site-bound deacylated tRNA move to the P and E sites, respectively. Catalyzes the coordinated movement of the two tRNA molecules, the mRNA and conformational changes in the ribosome. The polypeptide is Elongation factor G (Synechococcus sp. (strain CC9311)).